The following is a 96-amino-acid chain: Probable quinol oxidase subunit 4 (96 aa).

Helical transmembrane passes span 8 to 28 (TVGF…TLYT), 36 to 56 (LTII…MFMH), and 68 to 88 (FKVI…YWVM).

Belongs to the cytochrome c oxidase bacterial subunit 4 family.

The protein localises to the cell membrane. The catalysed reaction is 2 a quinol + O2 = 2 a quinone + 2 H2O. In terms of biological role, catalyzes quinol oxidation with the concomitant reduction of oxygen to water. The protein is Probable quinol oxidase subunit 4 (qoxD) of Staphylococcus aureus (strain USA300).